The chain runs to 205 residues: uncharacterized protein (205 aa).

This is an uncharacterized protein from Picosynechococcus sp. (strain ATCC 27264 / PCC 7002 / PR-6) (Agmenellum quadruplicatum).